Consider the following 134-residue polypeptide: Calvin cycle protein CP12-3, chloroplastic (134 aa).

Residues 1 to 21 (MISGSATASHGRVLLPSQRER) are disordered. The N-terminal 42 residues, 1–42 (MISGSATASHGRVLLPSQRERRPVSTGSNILRFRETVPRQFS), are a transit peptide targeting the chloroplast. 2 cysteine pairs are disulfide-bonded: Cys-78/Cys-87 and Cys-120/Cys-129.

The protein belongs to the CP12 family. As to quaternary structure, monomer. Component of a complex that contains two dimers of PRK, two tetramers of GAPDH and CP12. CP12 associates with GAPDH, causing its conformation to change. This GAPDH/CP12 complex binds PRK to form a half-complex (one unit). This unit probably dimerizes due partially to interactions between the enzymes of each unit. Contains two disulfide bonds; only the oxidized protein, with two disulfide bonds, is active in complex formation. The C-terminal disulfide is involved in the interaction with GAPDH and the N-terminal disulfide mediates the binding of PRK with this binary complex. Mostly expressed, at low levels, in stems and, to a lesser extent, in leaves and roots.

The protein localises to the plastid. Its subcellular location is the chloroplast. In terms of biological role, acts as a linker essential in the assembly of a core complex of PRK/GAPDH. Coordinates the reversible inactivation of chloroplast enzymes GAPDH and PRK during darkness in photosynthetic tissues. In Arabidopsis thaliana (Mouse-ear cress), this protein is Calvin cycle protein CP12-3, chloroplastic (CP12-3).